The primary structure comprises 473 residues: Sucrose-6-phosphate hydrolase (473 aa).

Substrate contacts are provided by residues 44–47 (LLND), Gln63, 106–107 (YS), 167–168 (RD), and Glu224. Asp47 is a catalytic residue.

It belongs to the glycosyl hydrolase 32 family.

It is found in the cytoplasm. The catalysed reaction is Hydrolysis of terminal non-reducing beta-D-fructofuranoside residues in beta-D-fructofuranosides.. It functions in the pathway glycan biosynthesis; sucrose metabolism. In Lactococcus lactis subsp. lactis (Streptococcus lactis), this protein is Sucrose-6-phosphate hydrolase (scrB).